Consider the following 218-residue polypeptide: Probable transaldolase (218 aa).

Residue Lys-84 is the Schiff-base intermediate with substrate of the active site.

This sequence belongs to the transaldolase family. Type 3B subfamily.

Its subcellular location is the cytoplasm. It catalyses the reaction D-sedoheptulose 7-phosphate + D-glyceraldehyde 3-phosphate = D-erythrose 4-phosphate + beta-D-fructose 6-phosphate. It functions in the pathway carbohydrate degradation; pentose phosphate pathway; D-glyceraldehyde 3-phosphate and beta-D-fructose 6-phosphate from D-ribose 5-phosphate and D-xylulose 5-phosphate (non-oxidative stage): step 2/3. Its function is as follows. Transaldolase is important for the balance of metabolites in the pentose-phosphate pathway. This is Probable transaldolase from Bartonella henselae (strain ATCC 49882 / DSM 28221 / CCUG 30454 / Houston 1) (Rochalimaea henselae).